The sequence spans 141 residues: Large-conductance mechanosensitive channel (141 aa).

The next 3 helical transmembrane spans lie at 17–37, 40–60, and 86–106; these read MDLA…ASIV, LIMP…LFIA, and GNFV…FIIV.

The protein belongs to the MscL family. Homopentamer.

The protein resides in the cell inner membrane. Channel that opens in response to stretch forces in the membrane lipid bilayer. May participate in the regulation of osmotic pressure changes within the cell. In Thiobacillus denitrificans (strain ATCC 25259 / T1), this protein is Large-conductance mechanosensitive channel.